Reading from the N-terminus, the 437-residue chain is Indole diterpene prenyltransferase anaPT (437 aa).

The segment at 1-28 (MSPLSMQTDSVQGTAENKSLETNGTSND) is disordered. Residues 102–103 (GF) and E111 contribute to the L-tryptophan site. 8 residues coordinate dimethylallyl diphosphate: R124, K208, Y210, Y282, Q355, Y357, Y422, and Y426.

The protein belongs to the tryptophan dimethylallyltransferase family.

The catalysed reaction is (R)-benzodiazepinedione + dimethylallyl diphosphate = (2R,3S,11R)-aszonalenin + diphosphate. It carries out the reaction (S)-benzodiazepinedione + dimethylallyl diphosphate = (2R,3S,11S)-aszonalenin + diphosphate. It participates in alkaloid biosynthesis. Functionally, indole diterpene prenyltransferase; part of the gene cluster that mediates the biosynthesis of the prenylated pyrroloindoline diketopiperazine acetylaszonalenin. The first step in the pathway is the formation of (R)-benzodiazepinedione by condensation of tryptophan and anthranilic acid catalyzed by the non-ribosomal peptide synthetase anaPS. The prenyltransferase anaPT then converts (R)-benzodiazepinedione to aszonalenin in the presence of dimethylallyl diphosphate (DMAPP) via C3-prenylation. The last step in the biosynthesis of acetylaszonalenin via acetylation of aszonalenin at position N1 catalyzed by anaAT. This Neosartorya fischeri (strain ATCC 1020 / DSM 3700 / CBS 544.65 / FGSC A1164 / JCM 1740 / NRRL 181 / WB 181) (Aspergillus fischerianus) protein is Indole diterpene prenyltransferase anaPT.